The primary structure comprises 508 residues: Hydroxymethylglutaryl-CoA synthase, mitochondrial (508 aa).

A mitochondrion-targeting transit peptide spans Met-1–Ser-37. An N6-succinyllysine modification is found at Lys-52. 2 residues coordinate (3S)-3-hydroxy-3-methylglutaryl-CoA: Glu-80 and Ala-81. Lys-83 is subject to N6-acetyllysine; alternate. Residue Lys-83 is modified to N6-succinyllysine; alternate. The Proton donor/acceptor role is filled by Glu-132. Positions 166, 204, and 208 each coordinate (3S)-3-hydroxy-3-methylglutaryl-CoA. The active-site Acyl-thioester intermediate is the Cys-166. Position 221 is an N6-succinyllysine (Lys-221). An N6-acetyllysine modification is found at Lys-243. At Lys-256 the chain carries N6-acetyllysine; alternate. N6-succinyllysine; alternate is present on Lys-256. 2 residues coordinate (3S)-3-hydroxy-3-methylglutaryl-CoA: Ser-258 and His-301. His-301 serves as the catalytic Proton donor/acceptor. An N6-acetyllysine modification is found at Lys-306. Lys-310 lines the (3S)-3-hydroxy-3-methylglutaryl-CoA pocket. At Lys-310 the chain carries N6-acetyllysine; alternate. Lys-310 carries the post-translational modification N6-succinyllysine; alternate. Lys-333 carries the N6-succinyllysine modification. An N6-acetyllysine; alternate mark is found at Lys-342, Lys-350, Lys-354, and Lys-358. An N6-succinyllysine; alternate mark is found at Lys-342, Lys-350, Lys-354, and Lys-358. Residues Asn-380 and Ser-414 each contribute to the (3S)-3-hydroxy-3-methylglutaryl-CoA site. Ser-433 is modified (phosphoserine). Lys-437 bears the N6-acetyllysine mark. A Phosphoserine modification is found at Ser-440. Lys-447 is subject to N6-acetyllysine; alternate. Lys-447 is modified (N6-succinyllysine; alternate). Ser-456 carries the phosphoserine modification. Residue Lys-473 is modified to N6-acetyllysine; alternate. The residue at position 473 (Lys-473) is an N6-succinyllysine; alternate. A Phosphoserine modification is found at Ser-477.

The protein belongs to the thiolase-like superfamily. HMG-CoA synthase family. Homodimer. In terms of processing, succinylated. Desuccinylated by SIRT5. Succinylation, at least at Lys-83 and Lys-310, inhibits the enzymatic activity. As to expression, expression in liver is 200-fold higher than in any other tissue. Low expression in colon, kidney, testis, and pancreas. Very low expression in heart and skeletal muscle. Not detected in brain. Highest expression detected in heart and skeletal muscle.

The protein resides in the mitochondrion. It catalyses the reaction acetoacetyl-CoA + acetyl-CoA + H2O = (3S)-3-hydroxy-3-methylglutaryl-CoA + CoA + H(+). It functions in the pathway metabolic intermediate biosynthesis; (R)-mevalonate biosynthesis; (R)-mevalonate from acetyl-CoA: step 2/3. Catalyzes the first irreversible step in ketogenesis, condensing acetyl-CoA to acetoacetyl-CoA to form HMG-CoA, which is converted by HMG-CoA reductase (HMGCR) into mevalonate. The protein is Hydroxymethylglutaryl-CoA synthase, mitochondrial (HMGCS2) of Homo sapiens (Human).